The sequence spans 102 residues: Putative lipid-transfer protein DIR1 (102 aa).

The signal sequence occupies residues 1–25 (MASKKAAMVMMAMIVIMAMLVDTSV). Disulfide bonds link cysteine 30–cysteine 67, cysteine 40–cysteine 56, cysteine 57–cysteine 94, and cysteine 69–cysteine 102. Glutamine 34 serves as a coordination point for a 1-acyl-sn-glycero-3-phosphocholine. Zn(2+) is bound at residue glutamate 36. Asparagine 38 is a binding site for a 1-acyl-sn-glycero-3-phosphocholine. Histidine 62 is a binding site for Zn(2+).

It belongs to the A9/FIL1 family. In terms of assembly, self-interacts and binds to AZI1. Does not interact with PDLP1. Zn(2+) is required as a cofactor.

The protein resides in the secreted. It localises to the extracellular space. It is found in the apoplast. The protein localises to the endoplasmic reticulum. Its subcellular location is the cell junction. The protein resides in the plasmodesma. Putative lipid transfer protein required for systemic acquired resistance (SAR) long distance signaling. May interact with a lipid-derived molecule to promote long distance signaling associated with SAR. Together with AZI1, required for glycerol-3-phosphate- (G3P) and azelaic acid- (AA) induced systemic acquired resistance (SAR). Component of plant systemic immunity involved in priming defenses in a AA-dependent manner, by modulating production and/or translocation of a mobile signal(s) during SAR. Is able to bind with high affinity monoacylated phospholipids, mainly lysophosphatidylcholines. The chain is Putative lipid-transfer protein DIR1 (DIR1) from Arabidopsis thaliana (Mouse-ear cress).